The sequence spans 75 residues: Large ribosomal subunit protein bL28 (75 aa).

This sequence belongs to the bacterial ribosomal protein bL28 family.

The polypeptide is Large ribosomal subunit protein bL28 (Buchnera aphidicola subsp. Acyrthosiphon pisum (strain 5A)).